A 317-amino-acid polypeptide reads, in one-letter code: Polysulfide reductase chain C (317 aa).

Transmembrane regions (helical) follow at residues 20 to 40, 54 to 75, 98 to 118, 147 to 167, 182 to 202, 221 to 237, 259 to 279, and 289 to 309; these read IAVYLFLAGLSAGAIISAIII, IIKAGALIAPLTIGAGLLLLIF, LGVLALFAYFPVVLIFLLGVF, IVTFVLAIGVGAYTGFLLSAM, FLASGISAGISGNLLIGLLFF, VILFEAFLLFILFVGMY, LFWLGVAGMGLALPVVLNVAL, and FVMLNALIVLAGVMALRFYIL.

The protein belongs to the NrfD family. Functional polysulfide reductase is made up of three different (A, B, and C) subunits.

Its subcellular location is the cell inner membrane. Could possibly serve as the membrane anchor of the enzyme. Functionally, component of the phosphorylative electron transport system with polysulfide as the terminal acceptor. This Wolinella succinogenes (strain ATCC 29543 / DSM 1740 / CCUG 13145 / JCM 31913 / LMG 7466 / NCTC 11488 / FDC 602W) (Vibrio succinogenes) protein is Polysulfide reductase chain C (psrC).